We begin with the raw amino-acid sequence, 214 residues long: Epoxide hydrolase EphH (214 aa).

Serine 28 serves as the catalytic Nucleophile. Catalysis depends on charge relay system residues aspartate 156 and histidine 186.

Belongs to the AB hydrolase superfamily.

The enzyme catalyses an epoxide + H2O = an ethanediol. With respect to regulation, inhibited by AUDA, a known epoxide hydrolase inhibitor. Its function is as follows. Catalyzes the hydrolysis of epoxide-containing substrates. In vitro, catalyzes the hydrolysis of the synthetic compounds PHOME and styrene oxide. Plays an essential role in subverting phagosomal acidification. Plays a major role in the survival of M.tuberculosis (Mtb) during in vitro acidic stress and protects Mtb in response to phagosomal acidification inside macrophages. Also supports Mtb growth under the nutrient-deprived condition at pH 7.0. The protein is Epoxide hydrolase EphH of Mycobacterium tuberculosis (strain ATCC 25618 / H37Rv).